A 306-amino-acid polypeptide reads, in one-letter code: Non-homologous end joining protein Ku 2 (306 aa).

Residues 21–206 form the Ku domain; sequence ISFGLVNIGV…EVSKQEIDMA (186 aa). Residues 233 to 306 form a disordered region; the sequence is LIDAKTKGTK…GSRDKTRKRA (74 aa). Residues 274–290 show a composition bias toward basic residues; sequence RTSRRKTTASASRRRSS. Positions 291–300 are enriched in basic and acidic residues; sequence SNREKTGSRD.

The protein belongs to the prokaryotic Ku family. In terms of assembly, homodimer. Interacts with LigD.

In terms of biological role, with LigD forms a non-homologous end joining (NHEJ) DNA repair enzyme, which repairs dsDNA breaks with reduced fidelity. Binds linear dsDNA with 5'- and 3'- overhangs but not closed circular dsDNA nor ssDNA. Recruits and stimulates the ligase activity of LigD. This chain is Non-homologous end joining protein Ku 2, found in Saccharopolyspora erythraea (strain ATCC 11635 / DSM 40517 / JCM 4748 / NBRC 13426 / NCIMB 8594 / NRRL 2338).